The primary structure comprises 706 residues: Ribosomal RNA large subunit methyltransferase K/L (706 aa).

In terms of domain architecture, THUMP spans 43–154; it reads LMYQSLLWSR…RDMASVALDL (112 aa).

The protein belongs to the methyltransferase superfamily. RlmKL family.

The protein resides in the cytoplasm. The enzyme catalyses guanosine(2445) in 23S rRNA + S-adenosyl-L-methionine = N(2)-methylguanosine(2445) in 23S rRNA + S-adenosyl-L-homocysteine + H(+). The catalysed reaction is guanosine(2069) in 23S rRNA + S-adenosyl-L-methionine = N(2)-methylguanosine(2069) in 23S rRNA + S-adenosyl-L-homocysteine + H(+). In terms of biological role, specifically methylates the guanine in position 2445 (m2G2445) and the guanine in position 2069 (m7G2069) of 23S rRNA. The chain is Ribosomal RNA large subunit methyltransferase K/L from Yersinia pestis (strain Pestoides F).